Reading from the N-terminus, the 425-residue chain is Serine--tRNA ligase (425 aa).

Residue 230-232 participates in L-serine binding; the sequence is TAE. 261 to 263 contacts ATP; sequence RSE. E284 is a binding site for L-serine. 348-351 contributes to the ATP binding site; sequence EISS. Residue S384 coordinates L-serine.

Belongs to the class-II aminoacyl-tRNA synthetase family. Type-1 seryl-tRNA synthetase subfamily. As to quaternary structure, homodimer. The tRNA molecule binds across the dimer.

The protein localises to the cytoplasm. It carries out the reaction tRNA(Ser) + L-serine + ATP = L-seryl-tRNA(Ser) + AMP + diphosphate + H(+). The enzyme catalyses tRNA(Sec) + L-serine + ATP = L-seryl-tRNA(Sec) + AMP + diphosphate + H(+). The protein operates within aminoacyl-tRNA biosynthesis; selenocysteinyl-tRNA(Sec) biosynthesis; L-seryl-tRNA(Sec) from L-serine and tRNA(Sec): step 1/1. Functionally, catalyzes the attachment of serine to tRNA(Ser). Is also able to aminoacylate tRNA(Sec) with serine, to form the misacylated tRNA L-seryl-tRNA(Sec), which will be further converted into selenocysteinyl-tRNA(Sec). The chain is Serine--tRNA ligase from Streptococcus pyogenes serotype M28 (strain MGAS6180).